A 1157-amino-acid polypeptide reads, in one-letter code: Voltage-dependent calcium channel subunit alpha-2/delta-2 (1157 aa).

The N-terminal stretch at 1 to 18 (MAVPARTCGASWPGPVRT) is a signal peptide. A disordered region spans residues 1-37 (MAVPARTCGASWPGPVRTARPWPGRGPRPCPDPRGPA). Residues 19–1119 (ARPWPGRGPR…TEDTSDCGRG (1101 aa)) are Extracellular-facing. The segment covering 24 to 34 (GRGPRPCPDPR) has biased composition (pro residues). A glycan (N-linked (GlcNAc...) asparagine) is linked at Asn-205. Residues 294 to 472 (DMVIIVDVSG…INTQEYLDVL (179 aa)) enclose the VWFA domain. A divalent metal cation is bound by residues Asp-300, Ser-302, and Ser-304. The MIDAS-like motif motif lies at 300-304 (DVSGS). N-linked (GlcNAc...) asparagine glycosylation is found at Asn-389, Asn-421, Asn-510, Asn-543, Asn-627, and Asn-864. A disulfide bond links Cys-446 and Cys-1104. Positions 488–577 (WTNVYEDALG…KPQITNFREP (90 aa)) constitute a Cache domain. Residues 1120–1140 (ASFPPSLGVLVSLQLLLLLGL) traverse the membrane as a helical segment. Over 1141-1157 (PPRPQPQIHSFTPSRRL) the chain is Cytoplasmic.

Belongs to the calcium channel subunit alpha-2/delta family. In terms of assembly, dimer formed of alpha-2-2 and delta-2 chains; disulfide-linked. Voltage-dependent calcium channels are multisubunit complexes, consisting of alpha-1 (CACNA1), alpha-2 (CACNA2D), beta (CACNB) and delta (CACNA2D) subunits in a 1:1:1:1 ratio. Post-translationally, N-glycosylated. May be proteolytically processed into subunits alpha-2-2 and delta-2 that are disulfide-linked. It is however unclear whether such cleavage really takes place in vivo and has a functional role. In heart, it is highly expressed in atrium and at lower level in ventricle.

Its subcellular location is the membrane. Its function is as follows. The alpha-2/delta subunit of voltage-dependent calcium channels regulates calcium current density and activation/inactivation kinetics of the calcium channel. Acts as a regulatory subunit for P/Q-type calcium channel (CACNA1A), N-type (CACNA1B), L-type (CACNA1C OR CACNA1D) and possibly T-type (CACNA1G). Overexpression induces apoptosis. The polypeptide is Voltage-dependent calcium channel subunit alpha-2/delta-2 (Cacna2d2) (Rattus norvegicus (Rat)).